The following is a 424-amino-acid chain: Serine--tRNA ligase (424 aa).

230–232 (TAE) serves as a coordination point for L-serine. ATP is bound at residue 261–263 (RSE). E284 contributes to the L-serine binding site. 348-351 (EISS) lines the ATP pocket. L-serine is bound at residue S382.

Belongs to the class-II aminoacyl-tRNA synthetase family. Type-1 seryl-tRNA synthetase subfamily. Homodimer. The tRNA molecule binds across the dimer.

It is found in the cytoplasm. It catalyses the reaction tRNA(Ser) + L-serine + ATP = L-seryl-tRNA(Ser) + AMP + diphosphate + H(+). The catalysed reaction is tRNA(Sec) + L-serine + ATP = L-seryl-tRNA(Sec) + AMP + diphosphate + H(+). The protein operates within aminoacyl-tRNA biosynthesis; selenocysteinyl-tRNA(Sec) biosynthesis; L-seryl-tRNA(Sec) from L-serine and tRNA(Sec): step 1/1. In terms of biological role, catalyzes the attachment of serine to tRNA(Ser). Is also able to aminoacylate tRNA(Sec) with serine, to form the misacylated tRNA L-seryl-tRNA(Sec), which will be further converted into selenocysteinyl-tRNA(Sec). The polypeptide is Serine--tRNA ligase (Solibacter usitatus (strain Ellin6076)).